A 1691-amino-acid chain; its full sequence is ADAMTS-like protein 3 (1691 aa).

Residues 1-26 form the signal peptide; it reads MASWTSPWWVLIGMVFMHSPLPQTTA. A TSP type-1 1 domain is found at 75–124; sequence DGNWDAWGDWSDCSRTCGGGASYSLRRCLTGRNCEGQNIRYKTCSNHDCP. Intrachain disulfides connect cysteine 87-cysteine 118, cysteine 91-cysteine 123, and cysteine 102-cysteine 108. The N-linked (GlcNAc...) asparagine glycan is linked to asparagine 293. TSP type-1 domains follow at residues 418 to 468, 478 to 535, and 564 to 626; these read PLPR…APKP, DCPK…IPCY, and EEPT…EACD. Intrachain disulfides connect cysteine 576–cysteine 620, cysteine 580–cysteine 625, and cysteine 591–cysteine 609. N-linked (GlcNAc...) asparagine glycosylation is present at asparagine 681. TSP type-1 domains follow at residues 703–760, 763–818, and 819–881; these read CPPR…FDCP, WHIE…ARTD, and CPPH…PECS. N-linked (GlcNAc...) asparagine glycosylation is present at asparagine 797. Intrachain disulfides connect cysteine 831-cysteine 875, cysteine 835-cysteine 880, and cysteine 846-cysteine 863. Residues 896-992 enclose the Ig-like C2-type 1 domain; that stretch reads PQILSVQRVY…IAGSAQETVV (97 aa). 2 N-linked (GlcNAc...) asparagine glycosylation sites follow: asparagine 915 and asparagine 927. Cysteine 934 and cysteine 982 are joined by a disulfide. N-linked (GlcNAc...) asparagine glycosylation occurs at asparagine 1102. Positions 1146 to 1184 are disordered; sequence PPAAQLRGETGSVSQSSHAKNSGKLTFKPKGPVLMRQSQ. Residues 1156–1169 are compositionally biased toward polar residues; sequence GSVSQSSHAKNSGK. The Ig-like C2-type 2 domain maps to 1185–1279; the sequence is PPSISFNKTI…GSDVESSSVL (95 aa). An N-linked (GlcNAc...) asparagine glycan is attached at asparagine 1191. Cysteine 1215 and cysteine 1263 are joined by a disulfide. Residues asparagine 1292, asparagine 1316, asparagine 1330, asparagine 1343, asparagine 1349, asparagine 1356, asparagine 1432, asparagine 1516, asparagine 1574, and asparagine 1591 are each glycosylated (N-linked (GlcNAc...) asparagine). The 83-residue stretch at 1296 to 1378 folds into the Ig-like C2-type 3 domain; the sequence is PEHNHLSVVV…ATNALGKAVA (83 aa). An intrachain disulfide couples cysteine 1321 to cysteine 1367. TSP type-1 domains follow at residues 1424 to 1482 and 1483 to 1545; these read QEPF…NIRD and CPAR…HPCV. Residues 1597–1644 enclose the TSP type-1 10 domain; the sequence is CDVCWHTGPWKPCTAACGRGFQSRKVDCIHTRSCKPVAKRHCVQKKKP. The PLAC domain maps to 1655–1691; the sequence is CDRDCTDTTHYCMFVKHLNLCSLDRYKQRCCQSCQEG.

Post-translationally, glycosylated. Can be O-fucosylated by POFUT2 on a serine or a threonine residue found within the consensus sequence C1-X(2)-(S/T)-C2-G of the TSP type-1 repeat domains where C1 and C2 are the first and second cysteine residue of the repeat, respectively. Fucosylated repeats can then be further glycosylated by the addition of a beta-1,3-glucose residue by the glucosyltransferase, B3GALTL. Fucosylation mediates the efficient secretion of ADAMTS family members. Can also be C-glycosylated with one or two mannose molecules on tryptophan residues within the consensus sequence W-X-X-W of the TPRs, and N-glycosylated. These other glycosylations can also facilitate secretion. Expressed in epithelial cells of the colon, fallopian tube, skin, breast, prostate, epididymis, liver, pancreatic islets and bile ducts, as well as by vascular endothelial cells, smooth muscle cells, fibroblasts, cortical and ganglionic neurons and cardiac myocytes. Also expressed by malignant epithelial cells in colon cancer, as well as breast, prostate, renal and skin tumors. Expression is significantly reduced in colon cancer compared to normal colon.

It is found in the secreted. The protein localises to the extracellular space. It localises to the extracellular matrix. In Homo sapiens (Human), this protein is ADAMTS-like protein 3 (ADAMTSL3).